A 106-amino-acid chain; its full sequence is Large ribosomal subunit protein uL24 (106 aa).

It belongs to the universal ribosomal protein uL24 family. As to quaternary structure, part of the 50S ribosomal subunit.

Its function is as follows. One of two assembly initiator proteins, it binds directly to the 5'-end of the 23S rRNA, where it nucleates assembly of the 50S subunit. One of the proteins that surrounds the polypeptide exit tunnel on the outside of the subunit. This Bordetella petrii (strain ATCC BAA-461 / DSM 12804 / CCUG 43448) protein is Large ribosomal subunit protein uL24.